A 322-amino-acid polypeptide reads, in one-letter code: MVNSLSRILFCSLLIFSVISLREERLETAPITDDPWDLDGPCQKYVEKLAVVQSEMVACATNWSIPPVVCTKCFQNYINFKQFEYETKNLNNVYSLDNRTCSQVIYDNYLLSYSTDISKALTSEIWEKSRCDSCITIKWNFPQNKSEVSFSERTMQFQNRMYEWRNCVVNYTSGGVLDDNLTNGSKICNLCKTTFDELFGYYWKIYTTPDVDFCVDVETTMNDTIHLWDDVWKCAEKQDRNRDLFGIMITFGTLLLLTALFYAASYIQGGGETRRLIQYARLSDPHGQRSRLLSSGMSDADLVSRVSPGSSVLYNVPIHQTR.

The N-terminal stretch at Met-1 to Ser-20 is a signal peptide. N-linked (GlcNAc...) asparagine glycans are attached at residues Asn-62, Asn-98, Asn-144, Asn-170, Asn-180, Asn-183, and Asn-222. The chain crosses the membrane as a helical span at residues Leu-244–Ala-264.

The protein belongs to the OSTM1 family.

It is found in the membrane. Its function is as follows. Modulates the transport of substances from the endosomal to lysosomal compartments. Plays a role in lysosome formation and function in coelomocytes. This chain is Coelomocyte uptake defective protein 15, found in Caenorhabditis elegans.